The primary structure comprises 472 residues: 3-isopropylmalate dehydratase large subunit (472 aa).

Cys346, Cys406, and Cys409 together coordinate [4Fe-4S] cluster.

This sequence belongs to the aconitase/IPM isomerase family. LeuC type 1 subfamily. In terms of assembly, heterodimer of LeuC and LeuD. The cofactor is [4Fe-4S] cluster.

It catalyses the reaction (2R,3S)-3-isopropylmalate = (2S)-2-isopropylmalate. It functions in the pathway amino-acid biosynthesis; L-leucine biosynthesis; L-leucine from 3-methyl-2-oxobutanoate: step 2/4. Its function is as follows. Catalyzes the isomerization between 2-isopropylmalate and 3-isopropylmalate, via the formation of 2-isopropylmaleate. The polypeptide is 3-isopropylmalate dehydratase large subunit (Thermus thermophilus (strain ATCC BAA-163 / DSM 7039 / HB27)).